The chain runs to 101 residues: MIPGEYQIQDGEIELNAGRRTLTLNVANSGDRPIQVGSHYHFFETNDALVFDRALARGMRLNIPAGTAVRFEPGQSREVELVELAGLRRVYGFAGRVMGEL.

It belongs to the urease beta subunit family. Heterotrimer of UreA (gamma), UreB (beta) and UreC (alpha) subunits. Three heterotrimers associate to form the active enzyme.

The protein resides in the cytoplasm. The catalysed reaction is urea + 2 H2O + H(+) = hydrogencarbonate + 2 NH4(+). Its pathway is nitrogen metabolism; urea degradation; CO(2) and NH(3) from urea (urease route): step 1/1. In Azotobacter vinelandii (strain DJ / ATCC BAA-1303), this protein is Urease subunit beta.